The chain runs to 447 residues: C4-dicarboxylate transport protein 3 (447 aa).

Helical transmembrane passes span 5–27 (TLGK…GVAA), 42–64 (IKLI…IARM), 77–99 (ALVY…VNLV), 146–165 (LARN…GIAL), 186–208 (VFSI…MAFT), 223–245 (LMAT…VARL), 315–337 (IFVA…LGVL), and 352–374 (FITL…VLLL).

It belongs to the dicarboxylate/amino acid:cation symporter (DAACS) (TC 2.A.23) family.

Its subcellular location is the cell inner membrane. In terms of biological role, responsible for the transport of dicarboxylates such as succinate, fumarate, and malate from the periplasm across the membrane. The chain is C4-dicarboxylate transport protein 3 (dctA3) from Ralstonia nicotianae (strain ATCC BAA-1114 / GMI1000) (Ralstonia solanacearum).